The primary structure comprises 266 residues: 5'-nucleotidase SurE (266 aa).

Residues D8, D9, S39, and N95 each coordinate a divalent metal cation.

Belongs to the SurE nucleotidase family. The cofactor is a divalent metal cation.

The protein localises to the cytoplasm. It catalyses the reaction a ribonucleoside 5'-phosphate + H2O = a ribonucleoside + phosphate. In terms of biological role, nucleotidase that shows phosphatase activity on nucleoside 5'-monophosphates. The polypeptide is 5'-nucleotidase SurE (Syntrophus aciditrophicus (strain SB)).